The following is a 452-amino-acid chain: Plasminogen-binding protein PgbA (452 aa).

A disordered region spans residues 265–452 (QEAIKEPKKA…RRKALEAGKK (188 aa)). 2 stretches are compositionally biased toward basic and acidic residues: residues 284-310 (LEEK…DERK) and 317-373 (KAME…KEPS). The span at 374–391 (DGNNATQQGEKQNAPKEN) shows a compositional bias: polar residues. Positions 392–452 (NAQKEENKPN…RRKALEAGKK (61 aa)) are enriched in basic and acidic residues.

The protein resides in the cell surface. Binds plasminogen, specifically, and in a concentration and lysine-dependent manner. Plasminogen is the precursor of plasmin, a serine protease that cleaves fibrin, fibronectin, laminin and vitronectin. Acquisition of plasminogen/plasmin could enable H.pylori to degrade host components. In Helicobacter pylori (strain ATCC 700392 / 26695) (Campylobacter pylori), this protein is Plasminogen-binding protein PgbA (pgbA).